The primary structure comprises 362 residues: 3-dehydroquinate synthase (362 aa).

Residues 70–75, 104–108, 128–129, Lys141, and Lys150 contribute to the NAD(+) site; these read DGEQYK, GVIGD, and TT. The Zn(2+) site is built by Glu183, His246, and His263.

Belongs to the sugar phosphate cyclases superfamily. Dehydroquinate synthase family. NAD(+) serves as cofactor. Requires Co(2+) as cofactor. It depends on Zn(2+) as a cofactor.

The protein localises to the cytoplasm. It carries out the reaction 7-phospho-2-dehydro-3-deoxy-D-arabino-heptonate = 3-dehydroquinate + phosphate. Its pathway is metabolic intermediate biosynthesis; chorismate biosynthesis; chorismate from D-erythrose 4-phosphate and phosphoenolpyruvate: step 2/7. In terms of biological role, catalyzes the conversion of 3-deoxy-D-arabino-heptulosonate 7-phosphate (DAHP) to dehydroquinate (DHQ). The protein is 3-dehydroquinate synthase of Pasteurella multocida (strain Pm70).